The sequence spans 306 residues: Ornithine carbamoyltransferase (306 aa).

Carbamoyl phosphate is bound by residues 54 to 57 (STRT), Gln81, Arg105, and 132 to 135 (HPLQ). L-ornithine-binding positions include Asn162, Asp226, and 230–231 (SM). Carbamoyl phosphate-binding positions include 266–267 (CL) and Arg294.

This sequence belongs to the aspartate/ornithine carbamoyltransferase superfamily. OTCase family.

The protein localises to the cytoplasm. It carries out the reaction carbamoyl phosphate + L-ornithine = L-citrulline + phosphate + H(+). It participates in amino-acid biosynthesis; L-arginine biosynthesis; L-arginine from L-ornithine and carbamoyl phosphate: step 1/3. In terms of biological role, reversibly catalyzes the transfer of the carbamoyl group from carbamoyl phosphate (CP) to the N(epsilon) atom of ornithine (ORN) to produce L-citrulline. The chain is Ornithine carbamoyltransferase from Sulfurisphaera tokodaii (strain DSM 16993 / JCM 10545 / NBRC 100140 / 7) (Sulfolobus tokodaii).